Here is a 192-residue protein sequence, read N- to C-terminus: MTFTLPQLPYALDALAPHVSKETLEYHYGKHHNTYVTNLNKLIPGTEFESMTLEEIIMKAKGGIFNNAAQVWNHTFYWHSMSPNGGGEPKGRLAEAINKSFGSFAAFKEQFSQTAATTFGSGWAWLVQDQSGALKIINTSNAGTPMTEGLNALLTCDVWEHAYYIDYRNRRPDYIEAFWSLVNWDFASSNLK.

Residues H27, H74, D157, and H161 each coordinate Fe cation.

It belongs to the iron/manganese superoxide dismutase family. In terms of assembly, homodimer. It depends on Fe cation as a cofactor.

The enzyme catalyses 2 superoxide + 2 H(+) = H2O2 + O2. Functionally, destroys superoxide anion radicals which are normally produced within the cells and which are toxic to biological systems. This chain is Superoxide dismutase [Fe] (sodB), found in Legionella pneumophila subsp. pneumophila (strain Philadelphia 1 / ATCC 33152 / DSM 7513).